A 70-amino-acid polypeptide reads, in one-letter code: Envelope small membrane protein (70 aa).

Glycine 2 is lipidated: N-myristoyl glycine; by host. Positions 2-15 (GSLWSKISQLFVDA) are endoplasmic reticulum retention signal. Residues 2–25 (GSLWSKISQLFVDAFTEFLVSVVD) are Virion surface-facing. The chain crosses the membrane as a helical span at residues 26-46 (IAIFLAILFGFTVAGWLLVFL). The Intravirion portion of the chain corresponds to 47-70 (LRVVCSALLRSRSAIHSPELSKVL).

The protein belongs to the arteriviridae E protein family. Homooligomer. Associates with itself into higher-order structures, including dimers, trimers and tetramers. Associates with the GP2a-GP3-GP4 complex. Post-translationally, myristoylated. Not glycosylated.

The protein resides in the virion membrane. Its subcellular location is the host endoplasmic reticulum membrane. It localises to the host Golgi apparatus membrane. The protein localises to the secreted. Its function is as follows. Minor envelope protein. May function as a viroporin in the virion envelope that facilitates uncoating of the virus in order to release the genomic RNA into the cytoplasm for subsequent replication. This Sus scrofa (Pig) protein is Envelope small membrane protein (GP2b).